A 198-amino-acid chain; its full sequence is Small ribosomal subunit protein uS4 (198 aa).

Residues 90 to 152 (TRLDNLVLRA…SRSNELFKEN (63 aa)) form the S4 RNA-binding domain.

The protein belongs to the universal ribosomal protein uS4 family. As to quaternary structure, part of the 30S ribosomal subunit. Contacts protein S5. The interaction surface between S4 and S5 is involved in control of translational fidelity.

In terms of biological role, one of the primary rRNA binding proteins, it binds directly to 16S rRNA where it nucleates assembly of the body of the 30S subunit. Its function is as follows. With S5 and S12 plays an important role in translational accuracy. The protein is Small ribosomal subunit protein uS4 of Finegoldia magna (strain ATCC 29328 / DSM 20472 / WAL 2508) (Peptostreptococcus magnus).